We begin with the raw amino-acid sequence, 236 residues long: MSIHIAAQQGEIADKILLPGDPLRAKFIAENFLDDAVCFNEVRNMFGYTGTYKGHRVSVMGTGMGMPSISIYARELIVDYGVKKLIRVGTAGSLNEEVHVRELVLAQAAATNSNIVRNDWPQYDFPQIASFDLLDKAYHIAKELGMTTHVGNVLSSDVFYSNYFEKNIELGKWGVKAVEMEAAALYYLAAQYHVDALAIMTISDSLVNPDEDTTAEERQNTFTDMMKVGLETLIAE.

H4 serves as a coordination point for a purine D-ribonucleoside. Residues G20, R24, R43, and 87 to 90 each bind phosphate; that span reads RVGT. Residues 179 to 181 and 203 to 204 each bind a purine D-ribonucleoside; these read EME and SD. Residue D204 is the Proton donor of the active site.

It belongs to the PNP/UDP phosphorylase family. As to quaternary structure, homohexamer; trimer of homodimers.

It carries out the reaction a purine D-ribonucleoside + phosphate = a purine nucleobase + alpha-D-ribose 1-phosphate. It catalyses the reaction a purine 2'-deoxy-D-ribonucleoside + phosphate = a purine nucleobase + 2-deoxy-alpha-D-ribose 1-phosphate. Its function is as follows. Catalyzes the reversible phosphorolytic breakdown of the N-glycosidic bond in the beta-(deoxy)ribonucleoside molecules, with the formation of the corresponding free purine bases and pentose-1-phosphate. The chain is Purine nucleoside phosphorylase DeoD-type from Streptococcus pneumoniae (strain JJA).